The following is a 347-amino-acid chain: MIVQLICTVCFLAVNTFHVRSSFDFLKADDMGEINQTLVSEFLLLGLSGYPKIEIVYFALILVMYLVILIGNGVLIIASIFDSHFHTPMYFFLGNLSFLDICYTSSSVPSTLVSLISKKRNISFSGCAVQMFFGFAMGSTECLLLGMMAFDRYVAICNPLRYPIILSKVAYVLMASVSWLSGGINSAVQTLLAMRLPFCGNNIINHFACEILAVLKLACADISLNIITMVISNMAFLVLPLMVIFFSYMFILYTILQMNSATGRRKAFSTCSAHLTVVIIFYGTIFFMYAKPKSQDLIGEEKLQALDKLISLFYGVVTPMLNPILYSLRNKDVKAAVKYLLNKKPIH.

At Met1–Ile55 the chain is on the extracellular side. Asn35 carries an N-linked (GlcNAc...) asparagine glycan. The chain crosses the membrane as a helical span at residues Val56–Ile76. At Ile77–His84 the chain is on the cytoplasmic side. Residues Phe85 to Ser105 form a helical membrane-spanning segment. The Extracellular portion of the chain corresponds to Ser106–Val129. A disulfide bridge links Cys127 with Cys219. Residues Gln130–Phe150 traverse the membrane as a helical segment. Residues Asp151–Val169 lie on the Cytoplasmic side of the membrane. A helical membrane pass occupies residues Ala170–Thr190. The Extracellular segment spans residues Leu191 to Ile227. A helical membrane pass occupies residues Thr228–Ser247. The Cytoplasmic segment spans residues Tyr248–Ala267. The chain crosses the membrane as a helical span at residues Phe268–Met288. Residues Tyr289–Asp307 are Extracellular-facing. The chain crosses the membrane as a helical span at residues Lys308–Leu328. Over Arg329–His347 the chain is Cytoplasmic.

Belongs to the G-protein coupled receptor 1 family.

The protein resides in the cell membrane. Odorant receptor. The chain is Olfactory receptor 13C3 (OR13C3) from Homo sapiens (Human).